Reading from the N-terminus, the 207-residue chain is Ribosomal RNA small subunit methyltransferase G (207 aa).

Residues glycine 76, glutamine 81, valine 127–glutamate 128, and arginine 141 contribute to the S-adenosyl-L-methionine site.

Belongs to the methyltransferase superfamily. RNA methyltransferase RsmG family.

Its subcellular location is the cytoplasm. It catalyses the reaction guanosine(527) in 16S rRNA + S-adenosyl-L-methionine = N(7)-methylguanosine(527) in 16S rRNA + S-adenosyl-L-homocysteine. Its function is as follows. Specifically methylates the N7 position of guanine in position 527 of 16S rRNA. This chain is Ribosomal RNA small subunit methyltransferase G, found in Neisseria meningitidis serogroup A / serotype 4A (strain DSM 15465 / Z2491).